We begin with the raw amino-acid sequence, 80 residues long: Large ribosomal subunit protein bL31B (80 aa).

Belongs to the bacterial ribosomal protein bL31 family. Type B subfamily. As to quaternary structure, part of the 50S ribosomal subunit.

In Xylella fastidiosa (strain M23), this protein is Large ribosomal subunit protein bL31B.